The following is a 497-amino-acid chain: Probable cytosol aminopeptidase (497 aa).

Positions 263 and 268 each coordinate Mn(2+). Lys275 is a catalytic residue. Mn(2+) is bound by residues Asp286, Asp345, and Glu347. Arg349 is an active-site residue.

This sequence belongs to the peptidase M17 family. Mn(2+) serves as cofactor.

The protein resides in the cytoplasm. It catalyses the reaction Release of an N-terminal amino acid, Xaa-|-Yaa-, in which Xaa is preferably Leu, but may be other amino acids including Pro although not Arg or Lys, and Yaa may be Pro. Amino acid amides and methyl esters are also readily hydrolyzed, but rates on arylamides are exceedingly low.. The catalysed reaction is Release of an N-terminal amino acid, preferentially leucine, but not glutamic or aspartic acids.. Functionally, presumably involved in the processing and regular turnover of intracellular proteins. Catalyzes the removal of unsubstituted N-terminal amino acids from various peptides. This chain is Probable cytosol aminopeptidase, found in Agrobacterium fabrum (strain C58 / ATCC 33970) (Agrobacterium tumefaciens (strain C58)).